Consider the following 347-residue polypeptide: Spermidine/putrescine import ATP-binding protein PotA (347 aa).

Residues 6-238 form the ABC transporter domain; that stretch reads LEIRNLSHYY…PKTKFVADFI (233 aa). 40-47 serves as a coordination point for ATP; that stretch reads GPSGCGKT.

It belongs to the ABC transporter superfamily. Spermidine/putrescine importer (TC 3.A.1.11.1) family. As to quaternary structure, the complex is composed of two ATP-binding proteins (PotA), two transmembrane proteins (PotB and PotC) and a solute-binding protein (PotD).

The protein resides in the cell inner membrane. The catalysed reaction is ATP + H2O + polyamine-[polyamine-binding protein]Side 1 = ADP + phosphate + polyamineSide 2 + [polyamine-binding protein]Side 1.. In terms of biological role, part of the ABC transporter complex PotABCD involved in spermidine/putrescine import. Responsible for energy coupling to the transport system. In Borrelia garinii subsp. bavariensis (strain ATCC BAA-2496 / DSM 23469 / PBi) (Borreliella bavariensis), this protein is Spermidine/putrescine import ATP-binding protein PotA.